Consider the following 427-residue polypeptide: Glutamate-1-semialdehyde 2,1-aminomutase 2 (427 aa).

Lys-267 bears the N6-(pyridoxal phosphate)lysine mark.

This sequence belongs to the class-III pyridoxal-phosphate-dependent aminotransferase family. HemL subfamily. Homodimer. Requires pyridoxal 5'-phosphate as cofactor.

The protein resides in the cytoplasm. It catalyses the reaction (S)-4-amino-5-oxopentanoate = 5-aminolevulinate. The protein operates within porphyrin-containing compound metabolism; protoporphyrin-IX biosynthesis; 5-aminolevulinate from L-glutamyl-tRNA(Glu): step 2/2. This chain is Glutamate-1-semialdehyde 2,1-aminomutase 2, found in Staphylococcus haemolyticus (strain JCSC1435).